A 429-amino-acid chain; its full sequence is Glutamyl-tRNA reductase (429 aa).

Substrate-binding positions include 50-53, Ser-110, 115-117, and Gln-121; these read TCNR and ETQ. Cys-51 serves as the catalytic Nucleophile. 190–195 provides a ligand contact to NADP(+); it reads GAGEMA.

The protein belongs to the glutamyl-tRNA reductase family. In terms of assembly, homodimer.

It catalyses the reaction (S)-4-amino-5-oxopentanoate + tRNA(Glu) + NADP(+) = L-glutamyl-tRNA(Glu) + NADPH + H(+). Its pathway is porphyrin-containing compound metabolism; protoporphyrin-IX biosynthesis; 5-aminolevulinate from L-glutamyl-tRNA(Glu): step 1/2. Functionally, catalyzes the NADPH-dependent reduction of glutamyl-tRNA(Glu) to glutamate 1-semialdehyde (GSA). In Campylobacter hominis (strain ATCC BAA-381 / DSM 21671 / CCUG 45161 / LMG 19568 / NCTC 13146 / CH001A), this protein is Glutamyl-tRNA reductase.